We begin with the raw amino-acid sequence, 332 residues long: Protein pelota homolog (332 aa).

The protein belongs to the eukaryotic release factor 1 family. Pelota subfamily. In terms of assembly, monomer. Requires a divalent metal cation as cofactor.

The protein resides in the cytoplasm. May function in recognizing stalled ribosomes, interact with stem-loop structures in stalled mRNA molecules, and effect endonucleolytic cleavage of the mRNA. May play a role in the release non-functional ribosomes and degradation of damaged mRNAs. Has endoribonuclease activity. The protein is Protein pelota homolog of Pyrobaculum aerophilum (strain ATCC 51768 / DSM 7523 / JCM 9630 / CIP 104966 / NBRC 100827 / IM2).